Here is a 135-residue protein sequence, read N- to C-terminus: CDGSH iron-sulfur domain-containing protein 2B (135 aa).

Topologically, residues 1 to 37 are lumenal; it reads MVLETISKIIKTQLPAYLKKFPLPETIGGFARLTVLD. A helical membrane pass occupies residues 38–60; the sequence is WLRLLPLLGILALLGYLTIRPFL. The Cytoplasmic portion of the chain corresponds to 61 to 135; it reads PKKKKQKDSL…GPLILKKKIL (75 aa). [2Fe-2S] cluster-binding residues include Cys-99, Cys-101, Cys-110, and His-114.

The protein belongs to the CISD protein family. CISD2 subfamily. As to quaternary structure, homodimer. It depends on [2Fe-2S] cluster as a cofactor.

The protein resides in the endoplasmic reticulum membrane. It is found in the mitochondrion outer membrane. In terms of biological role, regulator of autophagy that contributes to antagonize becn1-mediated cellular autophagy at the endoplasmic reticulum. Participates in the interaction of bcl2 with becn1 and is required for bcl2-mediated depression of endoplasmic reticulum Ca(2+) stores during autophagy. This is CDGSH iron-sulfur domain-containing protein 2B (cisd2b) from Salmo salar (Atlantic salmon).